Reading from the N-terminus, the 1029-residue chain is MVFDSEYDLGYPVYGAQFLSDGMLLVAGGGGVGVMIPNKLTALRVNFEKKKVLKRYREITLDSQDDSPSNLGVAQNMILMGCNEGYDKISSTGENHHIRKFVFENDHLKFIGAIDFDGSTDPEVYTKLICMSKDGTIAAIASSKLPTVIRIIDPIDLTEKYEIETGRDVRDIHFSPDGKLLVYITATSLEVVSVVTGRFLFRKTDFNKATDLARVKFINDDDFVLASGFKDKAGIALTTFRIRNTNPTILSSKKVFKDYKKITAMDVDPKGQLIALTTDDNSLALLSVKKLNVIKLFKQVHKDTITRVTVSPGGQYVATGSTDKTVHIFKISPDAMGGSNLWKSLLRFLFNVMKLAVVVIWAHLFYKYDLHHKLYDVTKVQLEKRSIEFPSFLDGILGTTTTRSTIIEGDIVSVVTDTAPALTSSVFSEDNKEYAKVEETTPSNSWSSVSESYWPSEVSNDIESVQENFDDIENKILENEDVVMKNDAIETEDESVGFDIDDTIKPIAPIDIDLELDDPLASTSVDTSEVLSSQVPVQLETLSGQSEIIDDKPEHLDEEVSEGFLGDHSKANLETEIENASTSISIEESTNSHSTFIESSSSLEEGRNTTSESSREISSETSIIKEDMLYPTENVSEQSATDKVNKNQSIDKIDVSSSSSIPTSSEGSSNSIVGDEAQMHISSLSSIETELSSSSIMINEESTIRNADSVVDENHSESKLPTEAKTSIVGSIDNENIDSTELNNLEEAVKTSSNESSLSQVTEELVKNNERVSNQSLSTVSTEHTEMKESSNLTEKKPESNSPESNLSESSLQTHDFSQISDTERNIVSSSAFVTDLPSEEASVNPGNTEGTIVNASLVDSQSSNSSVKTVETNVSQDEQTSQNETLSVGAATIDVIQGSYTSVSDSLDGMNNEEVGNKVHIEDVSNTLEIDSSASALSEQGDNQFSDSTPEVVNVINEFTTTPENETSSPLASSSTTFMTESPSPIAVANEVIENIQQDEQVAQQMEDTNSGSSNFQDTQHNVINDEL.

The Cytoplasmic portion of the chain corresponds to 1-344; it reads MVFDSEYDLG…AMGGSNLWKS (344 aa). 2 WD repeats span residues 257–296 and 300–339; these read KDYK…VIKL and VHKD…MGGS. The helical; Signal-anchor for type II membrane protein transmembrane segment at 345–365 threads the bilayer; the sequence is LLRFLFNVMKLAVVVIWAHLF. Residues 366–1029 lie on the Lumenal side of the membrane; sequence YKYDLHHKLY…TQHNVINDEL (664 aa). The N-linked (GlcNAc...) asparagine glycan is linked to Asn-579. Positions 579 to 592 are enriched in low complexity; sequence NASTSISIEESTNS. 3 disordered regions span residues 579–673, 710–732, and 747–821; these read NAST…NSIV, VVDE…VGSI, and EAVK…SQIS. Residues 593–603 show a composition bias toward polar residues; the sequence is HSTFIESSSSL. The N-linked (GlcNAc...) asparagine glycan is linked to Asn-608. Positions 613 to 628 are enriched in basic and acidic residues; the sequence is SSREISSETSIIKEDM. A compositionally biased stretch (polar residues) spans 633 to 642; that stretch reads ENVSEQSATD. Residues Asn-634 and Asn-647 are each glycosylated (N-linked (GlcNAc...) asparagine). Over residues 643–654 the composition is skewed to basic and acidic residues; the sequence is KVNKNQSIDKID. Positions 655–672 are enriched in low complexity; that stretch reads VSSSSSIPTSSEGSSNSI. The segment covering 712 to 722 has biased composition (basic and acidic residues); the sequence is DENHSESKLPT. Residues Asn-714, Asn-754, Asn-774, Asn-792, Asn-806, Asn-855, Asn-865, Asn-874, Asn-884, and Asn-966 are each glycosylated (N-linked (GlcNAc...) asparagine). Composition is skewed to polar residues over residues 750–762 and 771–782; these read KTSS…SQVT and RVSNQSLSTVST. The span at 783–799 shows a compositional bias: basic and acidic residues; that stretch reads EHTEMKESSNLTEKKPE. The span at 800 to 812 shows a compositional bias: low complexity; sequence SNSPESNLSESSL. Over residues 858–867 the composition is skewed to low complexity; the sequence is LVDSQSSNSS. 3 disordered regions span residues 858 to 886, 963 to 982, and 1003 to 1029; these read LVDS…QNET, TPEN…FMTE, and VAQQ…NDEL. The segment covering 868–886 has biased composition (polar residues); that stretch reads VKTVETNVSQDEQTSQNET. A Prevents secretion from ER motif is present at residues 1026-1029; the sequence is NDEL.

The protein belongs to the WD repeat SEC12 family.

It localises to the endoplasmic reticulum membrane. Its subcellular location is the golgi apparatus membrane. In terms of biological role, putative guanine nucleotide-exchange factor (GEF) involved in the formation or budding of transport vesicles from the ER. Positive regulator of SAR1 probably through inhibition of the GTPase activation by SEC23. This is Putative guanine nucleotide-exchange factor SED4 (SED4) from Candida glabrata (strain ATCC 2001 / BCRC 20586 / JCM 3761 / NBRC 0622 / NRRL Y-65 / CBS 138) (Yeast).